Here is a 151-residue protein sequence, read N- to C-terminus: Molybdopterin synthase catalytic subunit (151 aa).

Residues 38–40 (KVR), 104–105 (HR), Lys120, and 127–129 (KRE) each bind substrate.

It belongs to the MoaE family. In terms of assembly, heterotetramer of 2 MoaD subunits and 2 MoaE subunits. Also stable as homodimer. The enzyme changes between these two forms during catalysis.

It carries out the reaction 2 [molybdopterin-synthase sulfur-carrier protein]-C-terminal-Gly-aminoethanethioate + cyclic pyranopterin phosphate + H2O = molybdopterin + 2 [molybdopterin-synthase sulfur-carrier protein]-C-terminal Gly-Gly + 2 H(+). Its pathway is cofactor biosynthesis; molybdopterin biosynthesis. Functionally, converts molybdopterin precursor Z into molybdopterin. This requires the incorporation of two sulfur atoms into precursor Z to generate a dithiolene group. The sulfur is provided by MoaD. This is Molybdopterin synthase catalytic subunit (moaE) from Yersinia pestis.